The chain runs to 691 residues: tRNA-dihydrouridine(47) synthase [NAD(P)(+)]-like (691 aa).

Ser-2 carries the post-translational modification N-acetylserine. The tract at residues 55–94 (PPPPSRSVKQNDAADVRAPQSGLVQEKKSKRQLKRERREQ) is disordered. C3H1-type zinc fingers lie at residues 94 to 125 (QSTI…HDIE) and 138 to 163 (QCPF…HRDI). Positions 259 to 286 (LETEEVRPMKKAKSEDQKNSKTGDVGGV) are disordered. A compositionally biased stretch (basic and acidic residues) spans 262-279 (EEVRPMKKAKSEDQKNSK). Residues 344 to 346 (PLT) and Gln-398 contribute to the FMN site. The active-site Proton donor is the Cys-429. FMN contacts are provided by residues Lys-468, His-498, 531–533 (NGD), and 556–557 (AR).

Belongs to the Dus family. Dus3 subfamily. Requires FMN as cofactor.

The enzyme catalyses 5,6-dihydrouridine(47) in tRNA + NAD(+) = uridine(47) in tRNA + NADH + H(+). It carries out the reaction 5,6-dihydrouridine(47) in tRNA + NADP(+) = uridine(47) in tRNA + NADPH + H(+). The catalysed reaction is a 5,6-dihydrouridine in mRNA + NAD(+) = a uridine in mRNA + NADH + H(+). It catalyses the reaction a 5,6-dihydrouridine in mRNA + NADP(+) = a uridine in mRNA + NADPH + H(+). In terms of biological role, catalyzes the synthesis of dihydrouridine, a modified base found in the D-loop of most tRNAs. Specifically modifies U47 in cytoplasmic tRNAs. Catalyzes the synthesis of dihydrouridine in some mRNAs, thereby affecting their translation. The protein is tRNA-dihydrouridine(47) synthase [NAD(P)(+)]-like of Arabidopsis thaliana (Mouse-ear cress).